Consider the following 340-residue polypeptide: Protein-arginine kinase (340 aa).

Positions 14 to 244 (IVITTRIRLA…EQIINQENLS (231 aa)) constitute a Phosphagen kinase C-terminal domain. ATP-binding positions include 17–21 (TTRIR), His81, Arg115, 166–170 (RASVM), and 197–202 (RGLWGE).

It belongs to the ATP:guanido phosphotransferase family.

It carries out the reaction L-arginyl-[protein] + ATP = N(omega)-phospho-L-arginyl-[protein] + ADP + H(+). Its function is as follows. Catalyzes the specific phosphorylation of arginine residues in proteins. The protein is Protein-arginine kinase of Clostridium acetobutylicum (strain ATCC 824 / DSM 792 / JCM 1419 / IAM 19013 / LMG 5710 / NBRC 13948 / NRRL B-527 / VKM B-1787 / 2291 / W).